The chain runs to 208 residues: uncharacterized protein (208 aa).

This is an uncharacterized protein from Ureaplasma parvum serovar 3 (strain ATCC 700970).